A 98-amino-acid chain; its full sequence is Cobalt transport protein CbiN (98 aa).

Helical transmembrane passes span 6–26 and 68–88; these read VLMILGVIILTLAPLIMYSGL and SLLFALQAAIGAIIIGYFFGY.

The protein belongs to the CbiN family. Forms an energy-coupling factor (ECF) transporter complex composed of an ATP-binding protein (A component, CbiO), a transmembrane protein (T component, CbiQ) and 2 possible substrate-capture proteins (S components, CbiM and CbiN) of unknown stoichimetry.

It is found in the cell membrane. The protein operates within cofactor biosynthesis; adenosylcobalamin biosynthesis. In terms of biological role, part of the energy-coupling factor (ECF) transporter complex CbiMNOQ involved in cobalt import. The sequence is that of Cobalt transport protein CbiN from Methanococcus maripaludis (strain DSM 14266 / JCM 13030 / NBRC 101832 / S2 / LL).